The chain runs to 819 residues: Probable cadmium/zinc-transporting ATPase HMA1, chloroplastic (819 aa).

The transit peptide at 1–17 (MEPATLTRSSSLTRFPY) directs the protein to the chloroplast. Residues 18 to 122 (RRGLSTLRLA…IGWVRLANYL (105 aa)) are Stromal-facing. Residues 66–79 (DHHHDHHHDDEQDH) show a composition bias toward basic and acidic residues. The tract at residues 66 to 87 (DHHHDHHHDDEQDHHNHHHHHH) is disordered. Residues 123 to 144 (REHLHLCCSAAAMFLAAAVCPY) form a helical membrane-spanning segment. Residues 145–153 (LAPEPYIKS) are Lumenal-facing. Residues 154-173 (LQNAFMIVGFPLVGVSASLD) traverse the membrane as a helical segment. Over 174-180 (ALMDIAG) the chain is Stromal. The helical transmembrane segment at 181–201 (GKVNIHVLMALAAFASVFMGN) threads the bilayer. A topological domain (lumenal) is located at residue alanine 202. The helical transmembrane segment at 203–223 (LEGGLLLAMFNLAHIAEEFFT) threads the bilayer. Residues 224-361 (SRSMVDVKEL…KPKLQRWLDE (138 aa)) are Stromal-facing. A helical membrane pass occupies residues 362 to 384 (FGENYSKVVVVLSLAIAFLGPFL). The Lumenal segment spans residues 385 to 398 (FKWPFLSTAACRGS). Residues 399–416 (VYRALGLMVAASPCALAV) form a helical membrane-spanning segment. At 417-737 (APLAYATAIS…AKSRQTTSLV (321 aa)) the chain is on the stromal side. Aspartate 453 acts as the 4-aspartylphosphate intermediate in catalysis. Mg(2+) is bound by residues glutamate 682 and aspartate 686. Residues 738-757 (KQNVALALTSIFLAALPSVL) form a helical membrane-spanning segment. Topologically, residues 758 to 762 (GFVPL) are lumenal. Residues 763–781 (WLTVLLHEGGTLLVCLNSV) form a helical membrane-spanning segment. The Stromal portion of the chain corresponds to 782 to 819 (RGLNDPSWSWKQDIVHLINKLRSQEPTSSSSNSLSSAH).

Belongs to the cation transport ATPase (P-type) (TC 3.A.3) family. Type IB subfamily.

Its subcellular location is the plastid. The protein resides in the chloroplast inner membrane. It catalyses the reaction Zn(2+)(in) + ATP + H2O = Zn(2+)(out) + ADP + phosphate + H(+). The catalysed reaction is Cd(2+)(in) + ATP + H2O = Cd(2+)(out) + ADP + phosphate + H(+). Involved in cadmium/zinc transport. The sequence is that of Probable cadmium/zinc-transporting ATPase HMA1, chloroplastic (HMA1) from Arabidopsis thaliana (Mouse-ear cress).